The sequence spans 161 residues: Large ribosomal subunit protein uL15 (161 aa).

The tract at residues 1-43 (MKLSEISDNPGARKKRMRIGRGIGSGKGKTGGRGGKGQTARSG) is disordered. Over residues 21 to 37 (RGIGSGKGKTGGRGGKG) the composition is skewed to gly residues.

Belongs to the universal ribosomal protein uL15 family. In terms of assembly, part of the 50S ribosomal subunit.

Its function is as follows. Binds to the 23S rRNA. This is Large ribosomal subunit protein uL15 from Rhodopseudomonas palustris (strain BisB5).